Here is a 198-residue protein sequence, read N- to C-terminus: MSTKGAAFLKEYKIVMVGDGGVGKSAMTIQFIQSTFVDEYDPTIEDSYRKQCLIDSECAMLDILDTAGQEEYSAMRERFMRNGEGFVLIYSITSYHTFEQVQKLHEQIARVKDLEHFPMVLVGNKCDLEQDRQVPTSAGRDLAKQYNCQFFEASAKQNVRIQDAFHGLVREIRRSQQEKCKKQKQYDEKQASLCCIVM.

A GTP-binding site is contributed by 18–25 (GDGGVGKS). An Effector region motif is present at residues 40–48 (YDPTIEDSY). Residues 65 to 69 (DTAGQ) and 124 to 127 (NKCD) contribute to the GTP site. Cysteine methyl ester is present on Cys-195. Cys-195 carries S-farnesyl cysteine lipidation. A propeptide spans 196-198 (IVM) (removed in mature form).

The protein belongs to the small GTPase superfamily. Ras family.

Its subcellular location is the cell membrane. It carries out the reaction GTP + H2O = GDP + phosphate + H(+). With respect to regulation, alternates between an inactive form bound to GDP and an active form bound to GTP. Activated by a guanine nucleotide-exchange factor (GEF) and inactivated by a GTPase-activating protein (GAP). The chain is Ras-like protein 2 (RAS2) from Mucor circinelloides f. lusitanicus (Mucor racemosus var. lusitanicus).